The primary structure comprises 303 residues: Sulfate adenylyltransferase subunit 2 (303 aa).

The interval 281–303 (RQGRVIDHDSSGSMEKKKQEGYF) is disordered.

This sequence belongs to the PAPS reductase family. CysD subfamily. As to quaternary structure, heterodimer composed of CysD, the smaller subunit, and CysN.

The catalysed reaction is sulfate + ATP + H(+) = adenosine 5'-phosphosulfate + diphosphate. The protein operates within sulfur metabolism; hydrogen sulfide biosynthesis; sulfite from sulfate: step 1/3. Its function is as follows. With CysN forms the ATP sulfurylase (ATPS) that catalyzes the adenylation of sulfate producing adenosine 5'-phosphosulfate (APS) and diphosphate, the first enzymatic step in sulfur assimilation pathway. APS synthesis involves the formation of a high-energy phosphoric-sulfuric acid anhydride bond driven by GTP hydrolysis by CysN coupled to ATP hydrolysis by CysD. This chain is Sulfate adenylyltransferase subunit 2, found in Saccharophagus degradans (strain 2-40 / ATCC 43961 / DSM 17024).